Reading from the N-terminus, the 488-residue chain is Long chain base biosynthesis protein 2a (488 aa).

A helical transmembrane segment spans residues 4–24; it reads LPYTTALTTLFSYGLLFAFGQ. Position 311 is an N6-(pyridoxal phosphate)lysine (K311).

Belongs to the class-II pyridoxal-phosphate-dependent aminotransferase family. Heterodimer with LCB1. Component of the serine palmitoyltransferase (SPT) complex, composed of LCB1 and LCB2. Requires pyridoxal 5'-phosphate as cofactor.

It is found in the endoplasmic reticulum membrane. It carries out the reaction L-serine + hexadecanoyl-CoA + H(+) = 3-oxosphinganine + CO2 + CoA. The protein operates within lipid metabolism; sphingolipid metabolism. Serine palmitoyltransferase (SPT). The heterodimer formed with LCB1 constitutes the catalytic core. This Oryza sativa subsp. japonica (Rice) protein is Long chain base biosynthesis protein 2a.